Consider the following 439-residue polypeptide: Divalent metal cation transporter MntH 1 (439 aa).

9 helical membrane-spanning segments follow: residues 64 to 84, 139 to 161, 171 to 191, 214 to 234, 262 to 282, 300 to 320, 359 to 379, 380 to 400, and 418 to 438; these read FGYALLFVVVLASFSGMLLQS, LLGVSITTGVVLTAFDTLIVLAL, AIVLGLIATIGACFFVELVLI, PLYLAIGILGATVMPHNLYLH, IGSLSLALLVNAAILILAAAA, LLDPLVGGALASFLFGFALLA, LVPALIGVLWLGEAAVGKLLV, LSQVVLSLQLPFALWPLIRFS, and LAWSLFGLISAANLTLLYFWF.

This sequence belongs to the NRAMP family.

The protein localises to the cell inner membrane. Functionally, h(+)-stimulated, divalent metal cation uptake system. The sequence is that of Divalent metal cation transporter MntH 1 from Pseudomonas aeruginosa (strain ATCC 15692 / DSM 22644 / CIP 104116 / JCM 14847 / LMG 12228 / 1C / PRS 101 / PAO1).